The primary structure comprises 877 residues: Alanine--tRNA ligase (877 aa).

Zn(2+) contacts are provided by histidine 567, histidine 571, cysteine 669, and histidine 673.

The protein belongs to the class-II aminoacyl-tRNA synthetase family. Requires Zn(2+) as cofactor.

It is found in the cytoplasm. The enzyme catalyses tRNA(Ala) + L-alanine + ATP = L-alanyl-tRNA(Ala) + AMP + diphosphate. Functionally, catalyzes the attachment of alanine to tRNA(Ala) in a two-step reaction: alanine is first activated by ATP to form Ala-AMP and then transferred to the acceptor end of tRNA(Ala). Also edits incorrectly charged Ser-tRNA(Ala) and Gly-tRNA(Ala) via its editing domain. The sequence is that of Alanine--tRNA ligase from Rickettsia typhi (strain ATCC VR-144 / Wilmington).